The chain runs to 348 residues: Dihydroorotase (348 aa).

Positions 17 and 19 each coordinate Zn(2+). Substrate-binding positions include 19–21 (HLR) and N45. Residues K103, H140, and H178 each coordinate Zn(2+). Position 103 is an N6-carboxylysine (K103). H140 provides a ligand contact to substrate. L223 is a binding site for substrate. Residue D251 participates in Zn(2+) binding. D251 is an active-site residue. 2 residues coordinate substrate: H255 and A267.

Belongs to the metallo-dependent hydrolases superfamily. DHOase family. Class II DHOase subfamily. Homodimer. It depends on Zn(2+) as a cofactor.

The enzyme catalyses (S)-dihydroorotate + H2O = N-carbamoyl-L-aspartate + H(+). Its pathway is pyrimidine metabolism; UMP biosynthesis via de novo pathway; (S)-dihydroorotate from bicarbonate: step 3/3. Catalyzes the reversible cyclization of carbamoyl aspartate to dihydroorotate. The protein is Dihydroorotase of Enterobacter sp. (strain 638).